The chain runs to 630 residues: 1-deoxy-D-xylulose-5-phosphate synthase (630 aa).

Residues histidine 87 and 128-130 each bind thiamine diphosphate; that span reads GHS. Aspartate 159 contributes to the Mg(2+) binding site. Thiamine diphosphate is bound by residues 160-161, asparagine 188, phenylalanine 295, and glutamate 377; that span reads GA. Asparagine 188 serves as a coordination point for Mg(2+).

This sequence belongs to the transketolase family. DXPS subfamily. In terms of assembly, homodimer. Mg(2+) serves as cofactor. It depends on thiamine diphosphate as a cofactor.

It catalyses the reaction D-glyceraldehyde 3-phosphate + pyruvate + H(+) = 1-deoxy-D-xylulose 5-phosphate + CO2. Its pathway is metabolic intermediate biosynthesis; 1-deoxy-D-xylulose 5-phosphate biosynthesis; 1-deoxy-D-xylulose 5-phosphate from D-glyceraldehyde 3-phosphate and pyruvate: step 1/1. Catalyzes the acyloin condensation reaction between C atoms 2 and 3 of pyruvate and glyceraldehyde 3-phosphate to yield 1-deoxy-D-xylulose-5-phosphate (DXP). The polypeptide is 1-deoxy-D-xylulose-5-phosphate synthase (Pseudomonas syringae pv. syringae (strain B728a)).